We begin with the raw amino-acid sequence, 428 residues long: MVNNIMHEYVPPSQRLFHSRHRITRNDLKEEALHSGTTDWTTILDTTIDKDTNLISYAVPIIDNFAIPRANSQGSPVAPSPNHRSTMYSSSSSSASSVFSDGLFTPNNNRNSSGSSSLVIRPQKNLSVDSLIQENKRKINSEKESLSLIANNNDETLCTHTDPSIQNLIKSETKRNILNLKFQNRNLFRRELKLEKFWSNLRSCHTSGDETDLLLVISKHNLYWFGIPNDFRLPIYKRCLYHYSELDEAGFFSQYANNSLYLAIRKCCNNEEQETLSRSIFINLTKNVTWLNSRFDDNKDNKNSYTVTEGKFYQDFPNLYYHLKDKLKLNVIMDFIKPVIRNFMTNALNKHKLDGIGLELLDILIVTTYYGPNKINAFLMDTFILNLLKQCHYKFFVSNISELVIQISKIDCDLVILLEDLRSRIDLD.

Residues 72–91 (SQGSPVAPSPNHRSTMYSSS) form a disordered region. Phosphoserine is present on Ser-127.

This is an uncharacterized protein from Saccharomyces cerevisiae (strain ATCC 204508 / S288c) (Baker's yeast).